The sequence spans 103 residues: Large ribosomal subunit protein bL21 (103 aa).

This sequence belongs to the bacterial ribosomal protein bL21 family. In terms of assembly, part of the 50S ribosomal subunit. Contacts protein L20.

In terms of biological role, this protein binds to 23S rRNA in the presence of protein L20. In Brevibacillus brevis (strain 47 / JCM 6285 / NBRC 100599), this protein is Large ribosomal subunit protein bL21.